The chain runs to 198 residues: MLNFYNTKITVAGADEAGRGCLAGPVTAAAVILPIEFKNAVLNDSKTLNLKNRNFLKSLIEDEAITYGVAHVFMKEIDEINILNASILAMHRALQVLKFDPDHIIVDGNRFKPYQKIPHECIIKGDGKYMSIAAASILAKTYRDEFMEKIHEEFPDYNWKKNKGYPTKEHRAAIKKYGVTKYHRKSFKLLPDQLKIDF.

One can recognise an RNase H type-2 domain in the interval 9 to 198 (ITVAGADEAG…LLPDQLKIDF (190 aa)). The a divalent metal cation site is built by Asp-15, Glu-16, and Asp-107.

Belongs to the RNase HII family. The cofactor is Mn(2+). Mg(2+) serves as cofactor.

It is found in the cytoplasm. The catalysed reaction is Endonucleolytic cleavage to 5'-phosphomonoester.. Functionally, endonuclease that specifically degrades the RNA of RNA-DNA hybrids. The chain is Ribonuclease HII from Christiangramia forsetii (strain DSM 17595 / CGMCC 1.15422 / KT0803) (Gramella forsetii).